The sequence spans 592 residues: Keratin, type II cytoskeletal 5 (592 aa).

The segment covering 1–18 (MSRQSSVSFRSGGSRSFS) has biased composition (low complexity). The segment at 1–20 (MSRQSSVSFRSGGSRSFSTA) is disordered. Positions 1-169 (MSRQSSVSFR…DPSIQRVRTE (169 aa)) are head. Residues Ser-5, Ser-8, Ser-16, and Ser-21 each carry the phosphoserine modification. Thr-24 is modified (phosphothreonine; by CDK1). Ser-26, Ser-36, Ser-50, Ser-64, Ser-71, Ser-75, and Ser-82 each carry phosphoserine. A Phosphothreonine; by CDK1 modification is found at Thr-153. Thr-168 is subject to Phosphothreonine; by AURKB. The interval 170–205 (EREQIKTLNNKFASFIDKVRFLEQQNKVLDTKWTLL) is coil 1A. An IF rod domain is found at 170–483 (EREQIKTLNN…KLLEGEECRL (314 aa)). A linker 1 region spans residues 206-224 (QEQGTKTVRQNLEPLFEQY). Residues 225–317 (INNLRRQLDS…FFDAELSQMQ (93 aa)) are coil 1B. Positions 318 to 340 (THVSDTSVVLSMDNNRNLDLDSI) are linker 12. The segment at 341–479 (IAEVKAQYEE…ATYRKLLEGE (139 aa)) is coil 2. A tail region spans residues 480-592 (ECRLSGEGVG…TSSSRKSFKS (113 aa)). The disordered stretch occupies residues 568–592 (GSGGGSSSSVKFVSTTSSSRKSFKS). Residues 574–592 (SSSVKFVSTTSSSRKSFKS) are compositionally biased toward low complexity.

It belongs to the intermediate filament family. In terms of assembly, heterodimer of a type I and a type II keratin. Heterodimer with type I keratin KRT25 leading to the formation of keratin intermediate filament (KIF) network. Forms a heterodimer (via 2B domains) with KRT14 (via 2B domains). Interacts with TCHP. Interacts with EPPK1. Interacts with AMELX. Interacts with PKP1 (via N-terminus) and PKP2. Post-translationally, phosphorylated by CDK1, AURKB and Rho-kinase, phosphorylation is regulated by the cell cycle. Thr-24 phosphorylation, mediated by CDK1, peaks during prometaphase or metaphase cells with phosphorylated filamentous structures evident throughout the cytoplasm during early mitosis. CDK1 phosphorylates Thr-24 in mitotic cells at the site of injury. In terms of processing, O-glycosylated.

The protein resides in the cytoplasm. Required for the formation of keratin intermediate filaments in the basal epidermis and maintenance of the skin barrier in response to mechanical stress. Regulates the recruitment of Langerhans cells to the epidermis, potentially by modulation of the abundance of macrophage chemotactic cytokines, macrophage inflammatory cytokines and CTNND1 localization in keratinocytes. The polypeptide is Keratin, type II cytoskeletal 5 (KRT5) (Pan troglodytes (Chimpanzee)).